The sequence spans 287 residues: Glutamate racemase (287 aa).

Positions 1 to 15 (MATKPQDANTTSREA) are enriched in polar residues. The disordered stretch occupies residues 1 to 25 (MATKPQDANTTSREAITSKADSPPR). Residues 32–33 (DS) and 64–65 (YG) contribute to the substrate site. C96 serves as the catalytic Proton donor/acceptor. Position 97–98 (97–98 (NT)) interacts with substrate. Catalysis depends on C208, which acts as the Proton donor/acceptor. Substrate is bound at residue 209 to 210 (TH).

Belongs to the aspartate/glutamate racemases family.

The enzyme catalyses L-glutamate = D-glutamate. The protein operates within cell wall biogenesis; peptidoglycan biosynthesis. In terms of biological role, provides the (R)-glutamate required for cell wall biosynthesis. The sequence is that of Glutamate racemase from Yersinia pseudotuberculosis serotype O:3 (strain YPIII).